We begin with the raw amino-acid sequence, 1755 residues long: Transposon Ty1-ER2 Gag-Pol polyprotein (1755 aa).

Composition is skewed to polar residues over residues 1 to 10 (MESQQLSNYP), 48 to 60 (TKANSQQTTTPAS), and 127 to 152 (QSQFPQYPSSVGTPLSTPSPESGNTF). Disordered stretches follow at residues 1–93 (MESQ…MMTQ), 126–173 (PQSQ…RPPP), and 352–421 (GSRN…SKST). The span at 153–165 (TDSSSADSDMTST) shows a compositional bias: low complexity. The RNA-binding stretch occupies residues 299–401 (NNGIHINNKV…NSKSKTARAH (103 aa)). The span at 402 to 418 (NVSTSNNSPSTDNDSIS) shows a compositional bias: low complexity. Catalysis depends on Asp461, which acts as the For protease activity; shared with dimeric partner. Residues 583-640 (NVHTSESTRKYPYPFIHRMLAHANAQTIRYSLKNNTITYFNESDVDWSSAIDYQCPDC) are integrase-type zinc finger-like. In terms of domain architecture, Integrase catalytic spans 660 to 835 (NSYEPFQYLH…AGLDISTLLP (176 aa)). Asp671 and Asp736 together coordinate Mg(2+). A disordered region spans residues 958-1170 (AVSPTDSTPP…SSLGGIGDSN (213 aa)). The span at 960–969 (SPTDSTPPST) shows a compositional bias: low complexity. Over residues 1005-1015 (STPQISDIEST) the composition is skewed to polar residues. Residues 1038–1053 (ESSHASKSKDFRHSDS) are compositionally biased toward basic and acidic residues. Composition is skewed to polar residues over residues 1054-1082 (YSDNETNHTNVPISSTGGTNNKTVPQTSE) and 1095-1106 (SIDTSSSESNSL). Positions 1178 to 1212 (KKRSLEDNETEIKVSRDTWNTKNMRSLEPPRSKKR) match the Bipartite nuclear localization signal motif. A Reverse transcriptase Ty1/copia-type domain is found at 1338–1476 (NNYYITQLDI…DILGLEIKYQ (139 aa)). Mg(2+) is bound by residues Asp1346, Asp1427, Asp1428, Asp1610, Glu1652, and Asp1685. Residues 1610 to 1752 (DASYGNQPYY…IKTFKLLTNK (143 aa)) enclose the RNase H Ty1/copia-type domain.

As to quaternary structure, the capsid protein forms a homotrimer, from which the VLPs are assembled. The protease is a homodimer, whose active site consists of two apposed aspartic acid residues. Initially, virus-like particles (VLPs) are composed of the structural unprocessed proteins Gag and Gag-Pol, and also contain the host initiator methionine tRNA (tRNA(i)-Met) which serves as a primer for minus-strand DNA synthesis, and a dimer of genomic Ty RNA. Processing of the polyproteins occurs within the particle and proceeds by an ordered pathway, called maturation. First, the protease (PR) is released by autocatalytic cleavage of the Gag-Pol polyprotein yielding capsid protein p45 and a Pol-p154 precursor protein. This cleavage is a prerequisite for subsequent processing of Pol-p154 at the remaining sites to release the mature structural and catalytic proteins. Maturation takes place prior to the RT reaction and is required to produce transposition-competent VLPs.

The protein localises to the cytoplasm. The protein resides in the nucleus. The catalysed reaction is DNA(n) + a 2'-deoxyribonucleoside 5'-triphosphate = DNA(n+1) + diphosphate. It catalyses the reaction Endonucleolytic cleavage to 5'-phosphomonoester.. In terms of biological role, capsid protein (CA) is the structural component of the virus-like particle (VLP), forming the shell that encapsulates the retrotransposons dimeric RNA genome. The particles are assembled from trimer-clustered units and there are holes in the capsid shells that allow for the diffusion of macromolecules. CA also has nucleocapsid-like chaperone activity, promoting primer tRNA(i)-Met annealing to the multipartite primer-binding site (PBS), dimerization of Ty1 RNA and initiation of reverse transcription. Its function is as follows. The aspartyl protease (PR) mediates the proteolytic cleavages of the Gag and Gag-Pol polyproteins after assembly of the VLP. Reverse transcriptase/ribonuclease H (RT) is a multifunctional enzyme that catalyzes the conversion of the retro-elements RNA genome into dsDNA within the VLP. The enzyme displays a DNA polymerase activity that can copy either DNA or RNA templates, and a ribonuclease H (RNase H) activity that cleaves the RNA strand of RNA-DNA heteroduplexes during plus-strand synthesis and hydrolyzes RNA primers. The conversion leads to a linear dsDNA copy of the retrotransposon that includes long terminal repeats (LTRs) at both ends. Functionally, integrase (IN) targets the VLP to the nucleus, where a subparticle preintegration complex (PIC) containing at least integrase and the newly synthesized dsDNA copy of the retrotransposon must transit the nuclear membrane. Once in the nucleus, integrase performs the integration of the dsDNA into the host genome. This is Transposon Ty1-ER2 Gag-Pol polyprotein (TY1B-ER2) from Saccharomyces cerevisiae (strain ATCC 204508 / S288c) (Baker's yeast).